The sequence spans 348 residues: NADH-cytochrome b5 reductase 2 (348 aa).

The helical transmembrane segment at 41–61 (TLLYGAAAAAVAGAGYYFLGG) threads the bilayer. Positions 97-202 (QGWVSLKLEE…KGPLPKYPWT (106 aa)) constitute an FAD-binding FR-type domain. 205–240 (KHGHIALVAGGTGITPMFQLCRAIFNNPDDQTKVTL) is a binding site for FAD.

The protein belongs to the flavoprotein pyridine nucleotide cytochrome reductase family. The cofactor is FAD.

The protein localises to the mitochondrion outer membrane. The enzyme catalyses 2 Fe(III)-[cytochrome b5] + NADH = 2 Fe(II)-[cytochrome b5] + NAD(+) + H(+). May mediate the reduction of outer membrane cytochrome b5. In Chaetomium globosum (strain ATCC 6205 / CBS 148.51 / DSM 1962 / NBRC 6347 / NRRL 1970) (Soil fungus), this protein is NADH-cytochrome b5 reductase 2 (MCR1).